Reading from the N-terminus, the 372-residue chain is Phenylalanine--tRNA ligase alpha subunit (372 aa).

Glu-276 contributes to the Mg(2+) binding site.

Belongs to the class-II aminoacyl-tRNA synthetase family. Phe-tRNA synthetase alpha subunit type 1 subfamily. Tetramer of two alpha and two beta subunits. Mg(2+) serves as cofactor.

It localises to the cytoplasm. The catalysed reaction is tRNA(Phe) + L-phenylalanine + ATP = L-phenylalanyl-tRNA(Phe) + AMP + diphosphate + H(+). This Thermobifida fusca (strain YX) protein is Phenylalanine--tRNA ligase alpha subunit.